Here is a 585-residue protein sequence, read N- to C-terminus: Mitochondrial translation ATP-dependent RNA helicase mrh5 (585 aa).

Positions 87 to 117 (PKFHELPLNQNILDGLSTNFAEYKNSTPLQQ) match the Q motif motif. One can recognise a Helicase ATP-binding domain in the interval 121–351 (NALMKSGVSF…SRYITDQLGI (231 aa)). 134 to 141 (GWNGSGKS) is an ATP binding site. The DEAD box signature appears at 261–264 (DESD). Residues 390–584 (NLPYEFVRFN…PKSYEFDDEH (195 aa)) enclose the Helicase C-terminal domain.

It belongs to the DEAD box helicase family. Component of the MRH5C complex, composed of mrh5, ppr4, mtf2, and sls1. Proteins mtf2 and sls1 form a subcomplex that serves as a scaffold to bring mrh5 and ppr4 together. The MRH5C complex associates with the small subunit of the mitochondrial ribosome.

It localises to the mitochondrion. The catalysed reaction is ATP + H2O = ADP + phosphate + H(+). Functionally, translation activation factor that as part of the MRH5C complex specifically recruits cox1 mRNA to the mitochondrial ribosome for translation initiation. The chain is Mitochondrial translation ATP-dependent RNA helicase mrh5 from Schizosaccharomyces pombe (strain 972 / ATCC 24843) (Fission yeast).